A 171-amino-acid chain; its full sequence is uncharacterized protein (171 aa).

In terms of domain architecture, HTH gntR-type spans 30 to 97 (AGRVSAAYHA…PKKGIIICAL (68 aa)). The H-T-H motif DNA-binding region spans 57–76 (EIEIARQLGMSRTPVHEAMA).

This is an uncharacterized protein from Agrobacterium vitis (Rhizobium vitis).